We begin with the raw amino-acid sequence, 366 residues long: UDP-N-acetylglucosamine--N-acetylmuramyl-(pentapeptide) pyrophosphoryl-undecaprenol N-acetylglucosamine transferase (366 aa).

Residues 14–16 (TGG), Asn128, Arg169, Ser201, Ile251, and Gln296 contribute to the UDP-N-acetyl-alpha-D-glucosamine site.

It belongs to the glycosyltransferase 28 family. MurG subfamily.

The protein localises to the cell inner membrane. It carries out the reaction di-trans,octa-cis-undecaprenyl diphospho-N-acetyl-alpha-D-muramoyl-L-alanyl-D-glutamyl-meso-2,6-diaminopimeloyl-D-alanyl-D-alanine + UDP-N-acetyl-alpha-D-glucosamine = di-trans,octa-cis-undecaprenyl diphospho-[N-acetyl-alpha-D-glucosaminyl-(1-&gt;4)]-N-acetyl-alpha-D-muramoyl-L-alanyl-D-glutamyl-meso-2,6-diaminopimeloyl-D-alanyl-D-alanine + UDP + H(+). It functions in the pathway cell wall biogenesis; peptidoglycan biosynthesis. Its function is as follows. Cell wall formation. Catalyzes the transfer of a GlcNAc subunit on undecaprenyl-pyrophosphoryl-MurNAc-pentapeptide (lipid intermediate I) to form undecaprenyl-pyrophosphoryl-MurNAc-(pentapeptide)GlcNAc (lipid intermediate II). The protein is UDP-N-acetylglucosamine--N-acetylmuramyl-(pentapeptide) pyrophosphoryl-undecaprenol N-acetylglucosamine transferase of Christiangramia forsetii (strain DSM 17595 / CGMCC 1.15422 / KT0803) (Gramella forsetii).